Consider the following 536-residue polypeptide: Phosphoenolpyruvate carboxykinase (ATP) (536 aa).

R61, Y195, and K201 together coordinate substrate. ATP is bound by residues K201, H220, and 236 to 244; that span reads GLSGTGKTT. Mn(2+) contacts are provided by K201 and H220. Mn(2+) is bound at residue D257. ATP contacts are provided by E285, R322, and T447. R322 is a substrate binding site.

This sequence belongs to the phosphoenolpyruvate carboxykinase (ATP) family. It depends on Mn(2+) as a cofactor.

It localises to the cytoplasm. It carries out the reaction oxaloacetate + ATP = phosphoenolpyruvate + ADP + CO2. It functions in the pathway carbohydrate biosynthesis; gluconeogenesis. Involved in the gluconeogenesis. Catalyzes the conversion of oxaloacetate (OAA) to phosphoenolpyruvate (PEP) through direct phosphoryl transfer between the nucleoside triphosphate and OAA. In Rhizobium johnstonii (strain DSM 114642 / LMG 32736 / 3841) (Rhizobium leguminosarum bv. viciae), this protein is Phosphoenolpyruvate carboxykinase (ATP).